The primary structure comprises 435 residues: ATP-dependent Clp protease ATP-binding subunit ClpX 3 (435 aa).

The ClpX-type ZB domain maps to 1 to 53 (MSSDPPAKTQHCSFCGIEQGRDTPLIAGIEGQICEACVRLAEQVVANWGRKRS). Residues Cys12, Cys15, Cys34, and Cys37 each contribute to the Zn(2+) site. 125 to 132 (PTGTGKTL) serves as a coordination point for ATP.

It belongs to the ClpX chaperone family. As to quaternary structure, component of the ClpX-ClpP complex. Forms a hexameric ring that, in the presence of ATP, binds to fourteen ClpP subunits assembled into a disk-like structure with a central cavity, resembling the structure of eukaryotic proteasomes.

In terms of biological role, ATP-dependent specificity component of the Clp protease. It directs the protease to specific substrates. Can perform chaperone functions in the absence of ClpP. This chain is ATP-dependent Clp protease ATP-binding subunit ClpX 3, found in Methylococcus capsulatus (strain ATCC 33009 / NCIMB 11132 / Bath).